The following is a 171-amino-acid chain: MVSSNTDLTYSSAIEGGIVVSKADAVINWIRTNSMWPMPMGLACCAIELMQVGNGRFDIARFGAEVMRFSPRQSDCMIVAGSVTYKMAPQIRRIYDQMMSPKWVIAMGACASSGGMYRSYAHMQGVDRILPVDVYISGCPPRPEGILDALMKLQAKIRTERAGQNLFKATV.

[4Fe-4S] cluster is bound by residues C44, C45, C110, and C139.

Belongs to the complex I 20 kDa subunit family. NDH-1 is composed of 14 different subunits. Subunits NuoB, C, D, E, F, and G constitute the peripheral sector of the complex. Requires [4Fe-4S] cluster as cofactor.

It localises to the cell inner membrane. The catalysed reaction is a quinone + NADH + 5 H(+)(in) = a quinol + NAD(+) + 4 H(+)(out). Its function is as follows. NDH-1 shuttles electrons from NADH, via FMN and iron-sulfur (Fe-S) centers, to quinones in the respiratory chain. The immediate electron acceptor for the enzyme in this species is believed to be ubiquinone. Couples the redox reaction to proton translocation (for every two electrons transferred, four hydrogen ions are translocated across the cytoplasmic membrane), and thus conserves the redox energy in a proton gradient. In Opitutus terrae (strain DSM 11246 / JCM 15787 / PB90-1), this protein is NADH-quinone oxidoreductase subunit B 1.